A 230-amino-acid polypeptide reads, in one-letter code: uncharacterized protein (230 aa).

Polar residues predominate over residues 1 to 11 (MPVPSVTVTTD). The interval 1 to 88 (MPVPSVTVTT…TLKRPTSNSI (88 aa)) is disordered. Residues 63–73 (DDQHRHSDVHS) show a composition bias toward basic and acidic residues. Residues 79–88 (TLKRPTSNSI) are compositionally biased toward polar residues. Position 106 is a phosphoserine (S106). Residues 156–179 (LKREDSRVSSTKKEHINDHTDMHS) show a composition bias toward basic and acidic residues. A disordered region spans residues 156-203 (LKREDSRVSSTKKEHINDHTDMHSTRSKVTTNSQGSSLEPNKLNMAVE). Residues 182–194 (SKVTTNSQGSSLE) are compositionally biased toward polar residues.

This is an uncharacterized protein from Saccharomyces cerevisiae (strain ATCC 204508 / S288c) (Baker's yeast).